The sequence spans 131 residues: D-ribose pyranase (131 aa).

The active-site Proton donor is His20. Residues Asp28, His98, and 120-122 (YAN) each bind substrate.

The protein belongs to the RbsD / FucU family. RbsD subfamily. Homodecamer.

The protein localises to the cytoplasm. It carries out the reaction beta-D-ribopyranose = beta-D-ribofuranose. Its pathway is carbohydrate metabolism; D-ribose degradation; D-ribose 5-phosphate from beta-D-ribopyranose: step 1/2. Catalyzes the interconversion of beta-pyran and beta-furan forms of D-ribose. In Bacillus licheniformis (strain ATCC 14580 / DSM 13 / JCM 2505 / CCUG 7422 / NBRC 12200 / NCIMB 9375 / NCTC 10341 / NRRL NRS-1264 / Gibson 46), this protein is D-ribose pyranase.